Here is a 233-residue protein sequence, read N- to C-terminus: Antiholin-like protein LrgB (233 aa).

6 helical membrane-spanning segments follow: residues 5-25 (LGIN…VIAT), 33-53 (GFFL…FLKL), 63-83 (IGGD…AIPL), 97-117 (IFGG…LVAI), 152-172 (LTSL…AKIV), and 212-232 (IAVV…APIL).

The protein belongs to the CidB/LrgB family. LrgB subfamily.

The protein resides in the cell membrane. In terms of biological role, inhibits the expression or activity of extracellular murein hydrolases by interacting, possibly with LrgA, with the holin-like proteins CidA and/or CidB. The LrgAB and CidAB proteins may affect the proton motive force of the membrane. May be involved in programmed cell death (PCD), possibly triggering PCD in response to antibiotics and environmental stresses. The sequence is that of Antiholin-like protein LrgB from Staphylococcus epidermidis (strain ATCC 35984 / DSM 28319 / BCRC 17069 / CCUG 31568 / BM 3577 / RP62A).